Reading from the N-terminus, the 917-residue chain is Nitrate reductase [NADH] 1 (917 aa).

The disordered stretch occupies residues 62 to 81; the sequence is DSYDDSSSDDEDESHNRNVP. Positions 63–74 are enriched in acidic residues; sequence SYDDSSSDDEDE. C197 contributes to the Mo-molybdopterin binding site. In terms of domain architecture, Cytochrome b5 heme-binding spans 545 to 620; sequence SKMYSISEVR…LEDYRIGELI (76 aa). Positions 580 and 603 each coordinate heme. The FAD-binding FR-type domain maps to 660–772; it reads REKIPVRLIE…KGPLGHIEYK (113 aa). Residues 712–715, 729–733, F734, F741, 746–748, and T799 each bind FAD; these read RAYT, VVKVY, and LMS.

It belongs to the nitrate reductase family. As to quaternary structure, homodimer. FAD is required as a cofactor. Heme serves as cofactor. It depends on Mo-molybdopterin as a cofactor. As to expression, root, leaf, and shoot.

It catalyses the reaction nitrite + NAD(+) + H2O = nitrate + NADH + H(+). Functionally, nitrate reductase is a key enzyme involved in the first step of nitrate assimilation in plants, fungi and bacteria. This chain is Nitrate reductase [NADH] 1 (NIA1), found in Arabidopsis thaliana (Mouse-ear cress).